The sequence spans 146 residues: Large ribosomal subunit protein uL15y (146 aa).

2 stretches are compositionally biased toward basic residues: residues M1–H14 and R21–G30. The interval M1 to M38 is disordered.

The protein belongs to the universal ribosomal protein uL15 family.

The polypeptide is Large ribosomal subunit protein uL15y (RPL27AB) (Arabidopsis thaliana (Mouse-ear cress)).